The primary structure comprises 120 residues: Large ribosomal subunit protein bL20 (120 aa).

This sequence belongs to the bacterial ribosomal protein bL20 family.

In terms of biological role, binds directly to 23S ribosomal RNA and is necessary for the in vitro assembly process of the 50S ribosomal subunit. It is not involved in the protein synthesizing functions of that subunit. The sequence is that of Large ribosomal subunit protein bL20 from Methylacidiphilum infernorum (isolate V4) (Methylokorus infernorum (strain V4)).